The sequence spans 31 residues: Spectrin beta chain, non-erythrocytic 1 (31 aa).

Spectrin repeat units lie at residues 1 to 10, 11 to 19, and 20 to 31; these read VLLLSQDYGK, YKEVAELTR, and TQILAASYELHK. Tyr-27 is subject to Phosphotyrosine.

This sequence belongs to the spectrin family. In terms of assembly, interacts with ANK2. Interacts with CPNE4 (via VWFA domain). Like erythrocyte spectrin, the spectrin-like proteins are capable to form dimers which can further associate to tetramers. Associates with the gamma-tubulin complex in brain, but not in kidney, liver, sperm, or uterus. Interacts with CAMSAP1. Can form heterodimers with SPTAN1.

The protein resides in the cytoplasm. Its subcellular location is the cytoskeleton. It localises to the myofibril. It is found in the sarcomere. The protein localises to the m line. The protein resides in the cytosol. Its subcellular location is the cell membrane. Fodrin, which seems to be involved in secretion, interacts with calmodulin in a calcium-dependent manner and is thus candidate for the calcium-dependent movement of the cytoskeleton at the membrane. Plays a critical role in central nervous system development and function. The sequence is that of Spectrin beta chain, non-erythrocytic 1 (SPTBN1) from Capra hircus (Goat).